A 555-amino-acid polypeptide reads, in one-letter code: Dihydroxy-acid dehydratase (555 aa).

Position 78 (D78) interacts with Mg(2+). C119 is a [2Fe-2S] cluster binding site. Residues D120 and K121 each coordinate Mg(2+). K121 is subject to N6-carboxylysine. C191 is a [2Fe-2S] cluster binding site. Mg(2+) is bound at residue E444. Residue S470 is the Proton acceptor of the active site.

The protein belongs to the IlvD/Edd family. As to quaternary structure, homodimer. Requires [2Fe-2S] cluster as cofactor. It depends on Mg(2+) as a cofactor.

The catalysed reaction is (2R)-2,3-dihydroxy-3-methylbutanoate = 3-methyl-2-oxobutanoate + H2O. It catalyses the reaction (2R,3R)-2,3-dihydroxy-3-methylpentanoate = (S)-3-methyl-2-oxopentanoate + H2O. It participates in amino-acid biosynthesis; L-isoleucine biosynthesis; L-isoleucine from 2-oxobutanoate: step 3/4. Its pathway is amino-acid biosynthesis; L-valine biosynthesis; L-valine from pyruvate: step 3/4. Functionally, functions in the biosynthesis of branched-chain amino acids. Catalyzes the dehydration of (2R,3R)-2,3-dihydroxy-3-methylpentanoate (2,3-dihydroxy-3-methylvalerate) into 2-oxo-3-methylpentanoate (2-oxo-3-methylvalerate) and of (2R)-2,3-dihydroxy-3-methylbutanoate (2,3-dihydroxyisovalerate) into 2-oxo-3-methylbutanoate (2-oxoisovalerate), the penultimate precursor to L-isoleucine and L-valine, respectively. The chain is Dihydroxy-acid dehydratase from Nitratidesulfovibrio vulgaris (strain DSM 19637 / Miyazaki F) (Desulfovibrio vulgaris).